Consider the following 536-residue polypeptide: Bicoumarin synthase desC (536 aa).

The chain crosses the membrane as a helical span at residues Y12 to I32. N149 and N371 each carry an N-linked (GlcNAc...) asparagine glycan. Residue C480 participates in heme binding.

It belongs to the cytochrome P450 family. It depends on heme as a cofactor.

The protein localises to the membrane. It catalyses the reaction 2 7-demethylsiderin + NADPH + O2 = desertorin A + NADP(+) + 2 H2O. The protein operates within secondary metabolite biosynthesis. Functionally, non-reducing polyketide synthase; part of the gene cluster that mediates the biosynthesis of the bicoumarin desertorin. The non-reducing polyketide synthase desS first catalyzes the formation of the pentaketidic 4,7-dihydroxy-5-methylcoumarin from acetyl coenzyme A and 4 malonyl coenzyme A molecules. Further O-methylation by desB leads to the formation of 7-demethylsiderin. Then, an oxidative phenol coupling catalyzed by the cytochrome P450 monooxygenase desC forms the 6,8'-dimer M-desertorin A via dimerization the monomeric precursor, 7-demethylsiderin. M-desertorin A is further converted to M-desertorin C. The polypeptide is Bicoumarin synthase desC (Aspergillus desertorum (Emericella desertorum)).